Consider the following 299-residue polypeptide: Recombination-associated protein RdgC (299 aa).

The protein belongs to the RdgC family.

It localises to the cytoplasm. Its subcellular location is the nucleoid. In terms of biological role, may be involved in recombination. This Neisseria meningitidis serogroup B (strain ATCC BAA-335 / MC58) protein is Recombination-associated protein RdgC.